Here is a 235-residue protein sequence, read N- to C-terminus: Orotidine 5'-phosphate decarboxylase (235 aa).

Substrate is bound by residues Asp-16, Lys-38, 65–74, Thr-120, Arg-181, Gln-190, Gly-210, and Arg-211; that span reads DLKLHDIGNT. Lys-67 serves as the catalytic Proton donor.

This sequence belongs to the OMP decarboxylase family. Type 1 subfamily. As to quaternary structure, homodimer.

The enzyme catalyses orotidine 5'-phosphate + H(+) = UMP + CO2. Its pathway is pyrimidine metabolism; UMP biosynthesis via de novo pathway; UMP from orotate: step 2/2. In terms of biological role, catalyzes the decarboxylation of orotidine 5'-monophosphate (OMP) to uridine 5'-monophosphate (UMP). The protein is Orotidine 5'-phosphate decarboxylase of Rhodopseudomonas palustris (strain BisA53).